We begin with the raw amino-acid sequence, 174 residues long: Adipose-secreted signaling protein (174 aa).

At A2 the chain carries N-acetylalanine. The residue at position 147 (T147) is a Phosphothreonine.

It belongs to the ADISSP family. Expression is adipose-specific and highly brown adipose tissue-enriched.

The protein resides in the secreted. Functionally, adipocyte-secreted protein (adipokine) that acts as a key regulator for white adipose tissue (WAT) thermogenesis and glucose homeostasis at least in part through activation of protein kinase A (PKA). The polypeptide is Adipose-secreted signaling protein (Mus musculus (Mouse)).